A 473-amino-acid polypeptide reads, in one-letter code: MKPMTLPELTQEYILTHDLRPDTVKIYRAATKAYVNFFGECLACETTHRDMLEWRRSELARISKRSWNTYSSHLRTVYRYAMEHGLVELKVNPLKDTRVMPTKRPKKTIGNDVIVRARNWLRFLVQEELSTGKRSEITPAWFWLAVFETFYYTGIRLNALLCLRYENVDLGQRLIRVRGETEKTHREFMIPIPDGLMPHLVLVMDTAKKVGFSGTDQVFNINRFSGHYKREYMNSDQVEAMYKKLTNMTGTRMTPHRFRHTIASELMRQPERNIHITKNLLNHSNIATTMEYIEPDYDLMREVMNERGQQQAKINYLVRPIIPKSSGPAAGSAVPRVSLVSGTELQPATTESSEAKKADDTASNPPVAERLELMSTAPLVNVLKSTPVSVHSEPVTSNEAKAQALSLISDAPETEYEFGELEDIARWIRENAAGEMVVQIAAEEDIGTISEGKASIQSPDGYYRIPWSSGSVK.

The 79-residue stretch at 4–82 (MTLPELTQEY…HLRTVYRYAM (79 aa)) folds into the Core-binding (CB) domain. Positions 118–305 (RNWLRFLVQE…DYDLMREVMN (188 aa)) constitute a Tyr recombinase domain. Catalysis depends on residues Arg-156, Lys-183, His-256, Arg-259, and His-283. Tyr-292 acts as the O-(3'-phospho-DNA)-tyrosine intermediate in catalysis. The segment covering 341 to 352 (SGTELQPATTES) has biased composition (polar residues). The tract at residues 341 to 365 (SGTELQPATTESSEAKKADDTASNP) is disordered.

This sequence belongs to the 'phage' integrase family.

Its subcellular location is the cytoplasm. Site-specific tyrosine recombinase, which acts by catalyzing the cutting and rejoining of the recombining DNA molecules. This chain is Putative tyrosine recombinase XerC, found in Pseudomonas syringae.